The chain runs to 360 residues: Casein kinase II subunit alpha (360 aa).

Positions 38-323 (YQLVRKLGRG…AQEAMGHEYF (286 aa)) constitute a Protein kinase domain. Residues 44-52 (LGRGKYSEV) and lysine 67 each bind ATP. Catalysis depends on aspartate 155, which acts as the Proton acceptor. The segment at 334 to 360 (NGTEQADGQGASNSASSQSSDAKIDGA) is disordered. The segment covering 338–354 (QADGQGASNSASSQSSD) has biased composition (low complexity).

The protein belongs to the protein kinase superfamily. Ser/Thr protein kinase family. CK2 subfamily. Tetramer of two alpha and two beta chains. Expressed in a subset of the adult male sensory neurons: CEM head neurons, ray RnB neurons, and hook HOB tail neurons.

The protein localises to the cell projection. It localises to the axon. The protein resides in the cilium. It is found in the dendrite. Its subcellular location is the perikaryon. It carries out the reaction L-seryl-[protein] + ATP = O-phospho-L-seryl-[protein] + ADP + H(+). It catalyses the reaction L-threonyl-[protein] + ATP = O-phospho-L-threonyl-[protein] + ADP + H(+). In terms of biological role, casein kinases are operationally defined by their preferential utilization of acidic proteins such as caseins as substrates. The alpha chain contains the catalytic site. May participate in Wnt signaling. Modulates two aspects of male mating behavior; response to hermaphrodite contact and vulval location, acting in the same pathway as lov-1 and pkd-2. The sequence is that of Casein kinase II subunit alpha (kin-3) from Caenorhabditis elegans.